A 100-amino-acid polypeptide reads, in one-letter code: NADH-quinone oxidoreductase subunit K (100 aa).

The next 3 helical transmembrane spans lie at 4–24, 28–48, and 60–80; these read LQHGLILAAILFVLGLTGLVI, LLFMLIGLEIMINASALAFVV, and VMYILAISLAAAEASIGLALL.

The protein belongs to the complex I subunit 4L family. NDH-1 is composed of 13 different subunits. Subunits NuoA, H, J, K, L, M, N constitute the membrane sector of the complex.

It is found in the cell inner membrane. The enzyme catalyses a quinone + NADH + 5 H(+)(in) = a quinol + NAD(+) + 4 H(+)(out). Functionally, NDH-1 shuttles electrons from NADH, via FMN and iron-sulfur (Fe-S) centers, to quinones in the respiratory chain. The immediate electron acceptor for the enzyme in this species is believed to be ubiquinone. Couples the redox reaction to proton translocation (for every two electrons transferred, four hydrogen ions are translocated across the cytoplasmic membrane), and thus conserves the redox energy in a proton gradient. The polypeptide is NADH-quinone oxidoreductase subunit K (Citrobacter koseri (strain ATCC BAA-895 / CDC 4225-83 / SGSC4696)).